Reading from the N-terminus, the 333-residue chain is Phosphoribosylformylglycinamidine cyclo-ligase (333 aa).

Belongs to the AIR synthase family.

The protein localises to the cytoplasm. The catalysed reaction is 2-formamido-N(1)-(5-O-phospho-beta-D-ribosyl)acetamidine + ATP = 5-amino-1-(5-phospho-beta-D-ribosyl)imidazole + ADP + phosphate + H(+). It participates in purine metabolism; IMP biosynthesis via de novo pathway; 5-amino-1-(5-phospho-D-ribosyl)imidazole from N(2)-formyl-N(1)-(5-phospho-D-ribosyl)glycinamide: step 2/2. The sequence is that of Phosphoribosylformylglycinamidine cyclo-ligase from Methanosarcina mazei (strain ATCC BAA-159 / DSM 3647 / Goe1 / Go1 / JCM 11833 / OCM 88) (Methanosarcina frisia).